A 400-amino-acid polypeptide reads, in one-letter code: Imidazolonepropionase (400 aa).

Fe(3+)-binding residues include histidine 70 and histidine 72. Residues histidine 70 and histidine 72 each coordinate Zn(2+). Residues arginine 79, tyrosine 142, and histidine 175 each contribute to the 4-imidazolone-5-propanoate site. Tyrosine 142 is a binding site for N-formimidoyl-L-glutamate. Residue histidine 239 coordinates Fe(3+). Residue histidine 239 coordinates Zn(2+). A 4-imidazolone-5-propanoate-binding site is contributed by glutamine 242. Aspartate 314 is a Fe(3+) binding site. Residue aspartate 314 participates in Zn(2+) binding. 2 residues coordinate N-formimidoyl-L-glutamate: asparagine 316 and glycine 318. Residue threonine 319 coordinates 4-imidazolone-5-propanoate.

The protein belongs to the metallo-dependent hydrolases superfamily. HutI family. The cofactor is Zn(2+). Fe(3+) serves as cofactor.

The protein resides in the cytoplasm. It carries out the reaction 4-imidazolone-5-propanoate + H2O = N-formimidoyl-L-glutamate. It participates in amino-acid degradation; L-histidine degradation into L-glutamate; N-formimidoyl-L-glutamate from L-histidine: step 3/3. Catalyzes the hydrolytic cleavage of the carbon-nitrogen bond in imidazolone-5-propanoate to yield N-formimidoyl-L-glutamate. It is the third step in the universal histidine degradation pathway. The protein is Imidazolonepropionase of Methylobacterium nodulans (strain LMG 21967 / CNCM I-2342 / ORS 2060).